Consider the following 305-residue polypeptide: UDP-3-O-acyl-N-acetylglucosamine deacetylase (305 aa).

Zn(2+) contacts are provided by His-79, His-238, and Asp-242. The Proton donor role is filled by His-265.

The protein belongs to the LpxC family. Requires Zn(2+) as cofactor.

It catalyses the reaction a UDP-3-O-[(3R)-3-hydroxyacyl]-N-acetyl-alpha-D-glucosamine + H2O = a UDP-3-O-[(3R)-3-hydroxyacyl]-alpha-D-glucosamine + acetate. Its pathway is glycolipid biosynthesis; lipid IV(A) biosynthesis; lipid IV(A) from (3R)-3-hydroxytetradecanoyl-[acyl-carrier-protein] and UDP-N-acetyl-alpha-D-glucosamine: step 2/6. Catalyzes the hydrolysis of UDP-3-O-myristoyl-N-acetylglucosamine to form UDP-3-O-myristoylglucosamine and acetate, the committed step in lipid A biosynthesis. In Vibrio cholerae serotype O1 (strain ATCC 39541 / Classical Ogawa 395 / O395), this protein is UDP-3-O-acyl-N-acetylglucosamine deacetylase.